A 153-amino-acid polypeptide reads, in one-letter code: Allergen Pet c 1 (153 aa).

Belongs to the BetVI family. In terms of assembly, may form dimers.

The chain is Allergen Pet c 1 from Petroselinum crispum (Parsley).